The primary structure comprises 291 residues: Meiosis-specific protein SPO13 (291 aa).

Disordered stretches follow at residues 1–30 (MAPR…QEKT), 116–143 (SFDN…QSSQ), and 271–291 (CSDY…SSLN). A Nuclear localization signal motif is present at residues 3–6 (PRKR). Positions 116–125 (SFDNSLRFED) are enriched in basic and acidic residues. Residues 130–143 (PKSTSTPVLSQSSQ) are compositionally biased toward polar residues.

The protein localises to the nucleus. Its function is as follows. Required for meiosis I segmentation. Probably acts as a regulator of kinetochore function during meiosis I: required both for mono-orientation of kinetochores on sister chromosomes and protection of centromeric cohesin from separase-mediated cleavage. This is Meiosis-specific protein SPO13 (SPO13) from Saccharomyces cerevisiae (strain ATCC 204508 / S288c) (Baker's yeast).